Consider the following 521-residue polypeptide: Ribonuclease Y (521 aa).

The helical transmembrane segment at 5 to 25 threads the bilayer; sequence MMTMILAVIAAAIGFLIGNLL. The region spanning 211–271 is the KH domain; the sequence is TVSVVALPSD…VRREVAKLSL (61 aa). Residues 337 to 430 enclose the HD domain; it reads VYQHSLEVAF…VQAADALSGA (94 aa).

Belongs to the RNase Y family.

It localises to the cell membrane. In terms of biological role, endoribonuclease that initiates mRNA decay. The polypeptide is Ribonuclease Y (Geotalea uraniireducens (strain Rf4) (Geobacter uraniireducens)).